We begin with the raw amino-acid sequence, 456 residues long: Bifunctional protein GlmU (456 aa).

A pyrophosphorylase region spans residues 1–229 (MSNSAMSVVI…LSEVEGVNNR (229 aa)). UDP-N-acetyl-alpha-D-glucosamine-binding positions include 11 to 14 (LAAG), Lys25, Gln76, 81 to 82 (GT), 103 to 105 (YGD), Gly140, Glu154, Asn169, and Asn227. Position 105 (Asp105) interacts with Mg(2+). Residue Asn227 participates in Mg(2+) binding. The linker stretch occupies residues 230–250 (LQLARLERVYQAEQAEKLLLA). Positions 251–456 (GVMLRDPARF…QGWQRPVKKK (206 aa)) are N-acetyltransferase. Positions 333 and 351 each coordinate UDP-N-acetyl-alpha-D-glucosamine. The active-site Proton acceptor is His363. 2 residues coordinate UDP-N-acetyl-alpha-D-glucosamine: Tyr366 and Asn377. Acetyl-CoA is bound by residues Ala380, 386–387 (NY), Ser405, Ala423, and Arg440.

It in the N-terminal section; belongs to the N-acetylglucosamine-1-phosphate uridyltransferase family. This sequence in the C-terminal section; belongs to the transferase hexapeptide repeat family. As to quaternary structure, homotrimer. The cofactor is Mg(2+).

It localises to the cytoplasm. The catalysed reaction is alpha-D-glucosamine 1-phosphate + acetyl-CoA = N-acetyl-alpha-D-glucosamine 1-phosphate + CoA + H(+). It carries out the reaction N-acetyl-alpha-D-glucosamine 1-phosphate + UTP + H(+) = UDP-N-acetyl-alpha-D-glucosamine + diphosphate. It participates in nucleotide-sugar biosynthesis; UDP-N-acetyl-alpha-D-glucosamine biosynthesis; N-acetyl-alpha-D-glucosamine 1-phosphate from alpha-D-glucosamine 6-phosphate (route II): step 2/2. The protein operates within nucleotide-sugar biosynthesis; UDP-N-acetyl-alpha-D-glucosamine biosynthesis; UDP-N-acetyl-alpha-D-glucosamine from N-acetyl-alpha-D-glucosamine 1-phosphate: step 1/1. It functions in the pathway bacterial outer membrane biogenesis; LPS lipid A biosynthesis. Its function is as follows. Catalyzes the last two sequential reactions in the de novo biosynthetic pathway for UDP-N-acetylglucosamine (UDP-GlcNAc). The C-terminal domain catalyzes the transfer of acetyl group from acetyl coenzyme A to glucosamine-1-phosphate (GlcN-1-P) to produce N-acetylglucosamine-1-phosphate (GlcNAc-1-P), which is converted into UDP-GlcNAc by the transfer of uridine 5-monophosphate (from uridine 5-triphosphate), a reaction catalyzed by the N-terminal domain. The polypeptide is Bifunctional protein GlmU (Klebsiella pneumoniae subsp. pneumoniae (strain ATCC 700721 / MGH 78578)).